A 2885-amino-acid chain; its full sequence is E3 ubiquitin-protein ligase hyd (2885 aa).

Residues serine 83 to isoleucine 138 are disordered. Composition is skewed to low complexity over residues threonine 95–methionine 108 and leucine 116–isoleucine 138. In terms of domain architecture, UBA spans tyrosine 154–arginine 196. Over residues alanine 266–serine 276 the composition is skewed to low complexity. 3 disordered regions span residues alanine 266–serine 291, asparagine 580–aspartate 664, and alanine 711–aspartate 731. 2 stretches are compositionally biased toward polar residues: residues threonine 277–serine 291 and alanine 598–lysine 615. A phosphoserine mark is found at serine 628 and serine 631. Over residues threonine 650–aspartate 664 the composition is skewed to basic and acidic residues. A compositionally biased stretch (low complexity) spans alanine 711 to threonine 722. Residue serine 967 is modified to Phosphoserine. A compositionally biased stretch (low complexity) spans alanine 1008 to serine 1032. The interval alanine 1008–asparagine 1035 is disordered. A UBR-type zinc finger spans residues aspartate 1217–alanine 1285. Position 1362 is a phosphoserine (serine 1362). The tract at residues asparagine 1642–serine 1761 is disordered. A compositionally biased stretch (polar residues) spans asparagine 1669–alanine 1681. Acidic residues predominate over residues leucine 1696–aspartate 1721. Positions threonine 1735 to glutamine 1749 are enriched in polar residues. The residue at position 2037 (serine 2037) is a Phosphoserine. The disordered stretch occupies residues isoleucine 2124–aspartate 2143. At serine 2183 the chain carries Phosphoserine. A disordered region spans residues asparagine 2473–serine 2492. Residues proline 2482–serine 2492 are compositionally biased toward polar residues. The region spanning serine 2484 to lysine 2561 is the PABC domain. Serine 2574 is subject to Phosphoserine. In terms of domain architecture, HECT spans phenylalanine 2782–valine 2885. The active-site Glycyl thioester intermediate is the cysteine 2854.

It belongs to the UBR5 family.

The protein localises to the nucleus. It is found in the cytoplasm. The catalysed reaction is S-ubiquitinyl-[E2 ubiquitin-conjugating enzyme]-L-cysteine + [acceptor protein]-L-lysine = [E2 ubiquitin-conjugating enzyme]-L-cysteine + N(6)-ubiquitinyl-[acceptor protein]-L-lysine.. It participates in protein modification; protein ubiquitination. In terms of biological role, E3 ubiquitin-protein ligase which accepts ubiquitin from an E2 ubiquitin-conjugating enzyme in the form of a thioester and then directly transfers the ubiquitin to targeted substrate. Required for regulation of cell proliferation in imaginal disks and germ cells. Acts as a negative regulator of hh, ci and dpp expression in the anterior of the eye disk. Acts as a positive regulator of the canonical Wnt signaling pathway by mediating ubiquitination and degradation of gro. Catalyzes 'Lys-63'-linked polyubiquitination of akirin, thereby activating the immune deficiency pathway (Imd). The chain is E3 ubiquitin-protein ligase hyd (hyd) from Drosophila melanogaster (Fruit fly).